The sequence spans 444 residues: MARISCDLRFLLIPAAFMFIYIQMRLFQTQSQYADRLSSAIESENHCTSQMRGLIDEVSIKQSRIVALEDMKNRQDEELVQLKDLIQTFEKKGIAKLTQGGQMPVAAVVVMACSRADYLERTVKSVLTYQTPVASKYPLFISQDGSDQAVKSKSLSYNQLTYMQHLDFEPVVTERPGELTAYYKIARHYKWALDQLFYKHKFSRVIILEDDMEIAPDFFDYFEAAASLMDRDKTIMAASSWNDNGQKQFVHDPYALYRSDFFPGLGWMLKRSTWDELSPKWPKAYWDDWLRLKENHKGRQFIRPEVCRTYNFGEHGSSLGQFFSQYLEPIKLNDVTVDWKAKDLGYLTEGNYTKYFSGLVRQARPIQGSDLVLKAQNIKDDVRIRYKDQVEFERIAGEFGIFEEWKDGVPRTAYKGVVVFRIQTTRRVFLVGPDSVMQLGIRNS.

Residues 1 to 6 (MARISC) are Cytoplasmic-facing. The chain crosses the membrane as a helical; Signal-anchor for type II membrane protein span at residues 7-24 (DLRFLLIPAAFMFIYIQM). Residues 25–444 (RLFQTQSQYA…SVMQLGIRNS (420 aa)) are Lumenal-facing. The stretch at 61–92 (KQSRIVALEDMKNRQDEELVQLKDLIQTFEKK) forms a coiled coil. Substrate-binding residues include arginine 115, aspartate 144, histidine 188, and aspartate 210. Aspartate 211 provides a ligand contact to Mn(2+). The Proton acceptor role is filled by aspartate 287. Serine 318 is a binding site for substrate. Asparagine 351 is a glycosylation site (N-linked (GlcNAc...) asparagine).

Belongs to the glycosyltransferase 13 family. It depends on Mn(2+) as a cofactor. Post-translationally, glycosylated. In terms of tissue distribution, expressed in roots, stems, leaves and flowers.

Its subcellular location is the golgi apparatus membrane. It catalyses the reaction N(4)-(alpha-D-Man-(1-&gt;3)-[alpha-D-Man-(1-&gt;3)-[alpha-D-Man-(1-&gt;6)]-alpha-D-Man-(1-&gt;6)]-beta-D-Man-(1-&gt;4)-beta-D-GlcNAc-(1-&gt;4)-beta-D-GlcNAc)-L-asparaginyl-[protein] (N-glucan mannose isomer 5A1,2) + UDP-N-acetyl-alpha-D-glucosamine = N(4)-{beta-D-GlcNAc-(1-&gt;2)-alpha-D-Man-(1-&gt;3)-[alpha-D-Man-(1-&gt;3)-[alpha-D-Man-(1-&gt;6)]-alpha-D-Man-(1-&gt;6)]-beta-D-Man-(1-&gt;4)-beta-D-GlcNAc-(1-&gt;4)-beta-D-GlcNAc}-L-asparaginyl-[protein] + UDP + H(+). It participates in protein modification; protein glycosylation. Functionally, initiates complex N-linked carbohydrate formation. Essential for the conversion of high-mannose to hybrid and complex N-glycans. Required for normal root growth and morphology. This chain is Alpha-1,3-mannosyl-glycoprotein 2-beta-N-acetylglucosaminyltransferase, found in Arabidopsis thaliana (Mouse-ear cress).